Reading from the N-terminus, the 144-residue chain is Large ribosomal subunit protein uL15 (144 aa).

The tract at residues 1–60 (MKMNTLKPAEGSKQSPKRLGRGIGSGLGKTGGRGHKGQTSRSGGTIRPGFEGGQQPLQRR) is disordered. Positions 21-31 (RGIGSGLGKTG) are enriched in gly residues.

This sequence belongs to the universal ribosomal protein uL15 family. Part of the 50S ribosomal subunit.

Its function is as follows. Binds to the 23S rRNA. In Hahella chejuensis (strain KCTC 2396), this protein is Large ribosomal subunit protein uL15.